The sequence spans 98 residues: NADH-ubiquinone oxidoreductase chain 4L (98 aa).

3 helical membrane passes run M1–M21, A29–L49, and I61–V81.

It belongs to the complex I subunit 4L family. In terms of assembly, core subunit of respiratory chain NADH dehydrogenase (Complex I) which is composed of 45 different subunits.

The protein resides in the mitochondrion inner membrane. It catalyses the reaction a ubiquinone + NADH + 5 H(+)(in) = a ubiquinol + NAD(+) + 4 H(+)(out). Functionally, core subunit of the mitochondrial membrane respiratory chain NADH dehydrogenase (Complex I) which catalyzes electron transfer from NADH through the respiratory chain, using ubiquinone as an electron acceptor. Part of the enzyme membrane arm which is embedded in the lipid bilayer and involved in proton translocation. In Balaenoptera omurai (Omura's baleen whale), this protein is NADH-ubiquinone oxidoreductase chain 4L (MT-ND4L).